The chain runs to 127 residues: Fluoride-specific ion channel FluC 1 (127 aa).

Transmembrane regions (helical) follow at residues 6–26 (PLVT…GSNL), 29–49 (FVGL…CGSF), and 95–115 (EWAV…VLVG).

The protein belongs to the fluoride channel Fluc/FEX (TC 1.A.43) family.

The protein resides in the cell membrane. The enzyme catalyses fluoride(in) = fluoride(out). Fluoride-specific ion channel. Important for reducing fluoride concentration in the cell, thus reducing its toxicity. This is Fluoride-specific ion channel FluC 1 from Haloarcula marismortui (strain ATCC 43049 / DSM 3752 / JCM 8966 / VKM B-1809) (Halobacterium marismortui).